Consider the following 799-residue polypeptide: Ribosome-releasing factor 2, mitochondrial (799 aa).

Residues 19 to 306 enclose the tr-type G domain; the sequence is SKIRNIGIIA…AVVNYLPSPL (288 aa). GTP contacts are provided by residues 28-35, 93-97, and 145-148; these read AHIDAGKT, DTPGH, and NKMD.

Belongs to the TRAFAC class translation factor GTPase superfamily. Classic translation factor GTPase family. EF-G/EF-2 subfamily.

Its subcellular location is the mitochondrion. Functionally, mitochondrial GTPase that mediates the disassembly of ribosomes from messenger RNA at the termination of mitochondrial protein biosynthesis. Not involved in the GTP-dependent ribosomal translocation step during translation elongation. The chain is Ribosome-releasing factor 2, mitochondrial from Vanderwaltozyma polyspora (strain ATCC 22028 / DSM 70294 / BCRC 21397 / CBS 2163 / NBRC 10782 / NRRL Y-8283 / UCD 57-17) (Kluyveromyces polysporus).